We begin with the raw amino-acid sequence, 853 residues long: EF-hand domain-containing family member B (853 aa).

Disordered regions lie at residues 1–31 (MCSF…TRAP) and 244–266 (AQQP…PGNI). EF-hand domains lie at 581 to 616 (QNFD…ANLH) and 617 to 652 (LDKM…KDRI). Residues Asp-594, Asp-598, Glu-605, Asp-630, Asp-632, Asp-634, and Glu-641 each contribute to the Ca(2+) site.

Microtubule inner protein component of sperm flagellar doublet microtubules. Interacts with STIM1 and ORAI1; the interactions take place upon Ca(2+)-store depletion and dissociate through a Ca(2+)-dependent mechanism. Interaction with STIM1 inhibits STIM1 interaction with SARAF.

It localises to the cytoplasm. The protein localises to the cytoskeleton. Its subcellular location is the cilium axoneme. It is found in the flagellum axoneme. In terms of biological role, microtubule inner protein (MIP) part of the dynein-decorated doublet microtubules (DMTs) in cilia axoneme, which is required for motile cilia beating. Cytosolic sensor for calcium, modulates the interaction of STIM1 and ORAI1 upon store depletion and the activation of store-operated Ca(2+) entry (SOCE) and NFAT translocation from cytosol to nucleus. This chain is EF-hand domain-containing family member B, found in Mus musculus (Mouse).